The following is a 227-amino-acid chain: Cytochrome c oxidase subunit 2 (227 aa).

Over 1–14 (MAHPVQLSLQDATS) the chain is Mitochondrial intermembrane. The helical transmembrane segment at 15 to 45 (PIMEELITFHDHAFMAMSLISFLVLYALALT) threads the bilayer. Over 46–59 (LTTKLTNTNITDAQ) the chain is Mitochondrial matrix. Residues 60 to 87 (EMETIWTILPAVILILIALPSLRVLYLT) traverse the membrane as a helical segment. The Mitochondrial intermembrane segment spans residues 88 to 227 (DEVNDPSLTI…IFEMGPVFTL (140 aa)). Residues H161, C196, E198, C200, H204, and M207 each coordinate Cu cation. E198 is a binding site for Mg(2+).

Belongs to the cytochrome c oxidase subunit 2 family. As to quaternary structure, component of the cytochrome c oxidase (complex IV, CIV), a multisubunit enzyme composed of 14 subunits. The complex is composed of a catalytic core of 3 subunits MT-CO1, MT-CO2 and MT-CO3, encoded in the mitochondrial DNA, and 11 supernumerary subunits COX4I, COX5A, COX5B, COX6A, COX6B, COX6C, COX7A, COX7B, COX7C, COX8 and NDUFA4, which are encoded in the nuclear genome. The complex exists as a monomer or a dimer and forms supercomplexes (SCs) in the inner mitochondrial membrane with NADH-ubiquinone oxidoreductase (complex I, CI) and ubiquinol-cytochrome c oxidoreductase (cytochrome b-c1 complex, complex III, CIII), resulting in different assemblies (supercomplex SCI(1)III(2)IV(1) and megacomplex MCI(2)III(2)IV(2)). Found in a complex with TMEM177, COA6, COX18, COX20, SCO1 and SCO2. Interacts with TMEM177 in a COX20-dependent manner. Interacts with COX20. Interacts with COX16. Requires Cu cation as cofactor.

Its subcellular location is the mitochondrion inner membrane. It catalyses the reaction 4 Fe(II)-[cytochrome c] + O2 + 8 H(+)(in) = 4 Fe(III)-[cytochrome c] + 2 H2O + 4 H(+)(out). Its function is as follows. Component of the cytochrome c oxidase, the last enzyme in the mitochondrial electron transport chain which drives oxidative phosphorylation. The respiratory chain contains 3 multisubunit complexes succinate dehydrogenase (complex II, CII), ubiquinol-cytochrome c oxidoreductase (cytochrome b-c1 complex, complex III, CIII) and cytochrome c oxidase (complex IV, CIV), that cooperate to transfer electrons derived from NADH and succinate to molecular oxygen, creating an electrochemical gradient over the inner membrane that drives transmembrane transport and the ATP synthase. Cytochrome c oxidase is the component of the respiratory chain that catalyzes the reduction of oxygen to water. Electrons originating from reduced cytochrome c in the intermembrane space (IMS) are transferred via the dinuclear copper A center (CU(A)) of subunit 2 and heme A of subunit 1 to the active site in subunit 1, a binuclear center (BNC) formed by heme A3 and copper B (CU(B)). The BNC reduces molecular oxygen to 2 water molecules using 4 electrons from cytochrome c in the IMS and 4 protons from the mitochondrial matrix. In Macaca fascicularis (Crab-eating macaque), this protein is Cytochrome c oxidase subunit 2 (MT-CO2).